A 249-amino-acid chain; its full sequence is 1-(5-phosphoribosyl)-5-[(5-phosphoribosylamino)methylideneamino] imidazole-4-carboxamide isomerase (249 aa).

Asp10 serves as the catalytic Proton acceptor. The active-site Proton donor is the Asp136.

This sequence belongs to the HisA/HisF family.

Its subcellular location is the cytoplasm. The enzyme catalyses 1-(5-phospho-beta-D-ribosyl)-5-[(5-phospho-beta-D-ribosylamino)methylideneamino]imidazole-4-carboxamide = 5-[(5-phospho-1-deoxy-D-ribulos-1-ylimino)methylamino]-1-(5-phospho-beta-D-ribosyl)imidazole-4-carboxamide. Its pathway is amino-acid biosynthesis; L-histidine biosynthesis; L-histidine from 5-phospho-alpha-D-ribose 1-diphosphate: step 4/9. The chain is 1-(5-phosphoribosyl)-5-[(5-phosphoribosylamino)methylideneamino] imidazole-4-carboxamide isomerase from Symbiobacterium thermophilum (strain DSM 24528 / JCM 14929 / IAM 14863 / T).